The primary structure comprises 947 residues: Protocadherin alpha-4 (947 aa).

An N-terminal signal peptide occupies residues M1–G29. 6 Cadherin domains span residues Q30–F133, P134–F242, D243–L350, E351–F455, A456–L565, and G588–A678. At Q30 to N697 the chain is on the extracellular side. C96 and C102 are disulfide-bonded. N-linked (GlcNAc...) asparagine glycosylation is found at N139, N257, and N265. N548 is a glycosylation site (N-linked (GlcNAc...) asparagine). The helical transmembrane segment at V698–Y718 threads the bilayer. The Cytoplasmic segment spans residues T719–Q947. 6 PXXP repeats span residues P734–P737, P774–P777, P796–P799, P829–P832, P870–P873, and P888–P891. Residues P734–P891 are 6 X 4 AA repeats of P-X-X-P. Residues T738–Q947 form a required for interaction with FYN region. Disordered regions lie at residues R754–Y805, G828–P853, and Y868–Q947. The segment covering D906–K920 has biased composition (basic and acidic residues).

As to quaternary structure, forms homodimers in trans (molecules expressed by two different cells). Forms promiscuous heterodimers in cis (at the plasma membrane of the same cell) with other protocadherins. Interacts with FYN.

The protein resides in the cell membrane. Its function is as follows. Calcium-dependent cell-adhesion protein involved in cells self-recognition and non-self discrimination. Thereby, it is involved in the establishment and maintenance of specific neuronal connections in the brain. This is Protocadherin alpha-4 from Homo sapiens (Human).